We begin with the raw amino-acid sequence, 644 residues long: Probable lysophospholipase 2 (644 aa).

Positions 1-19 (MYFQSFYFLALLLATAVYG) are cleaved as a signal peptide. Residues asparagine 44, asparagine 96, asparagine 141, asparagine 178, asparagine 221, asparagine 245, asparagine 253, asparagine 281, asparagine 286, asparagine 316, asparagine 319, asparagine 373, asparagine 393, asparagine 449, asparagine 501, asparagine 558, asparagine 579, and asparagine 596 are each glycosylated (N-linked (GlcNAc...) asparagine). One can recognise a PLA2c domain in the interval 53-600 (SCDSSEIMVN…SQYCWNGTVD (548 aa)).

This sequence belongs to the lysophospholipase family.

The protein resides in the secreted. It catalyses the reaction a 1-acyl-sn-glycero-3-phosphocholine + H2O = sn-glycerol 3-phosphocholine + a fatty acid + H(+). In terms of biological role, catalyzes the release of fatty acids from lysophospholipids. The protein is Probable lysophospholipase 2 (plb2) of Schizosaccharomyces pombe (strain 972 / ATCC 24843) (Fission yeast).